The primary structure comprises 232 residues: DnaJ homolog subfamily B member 8 (232 aa).

The J domain occupies 3–69 (NYYEVLGVQA…KKRSLYDRAG (67 aa)).

As to quaternary structure, interacts with histone deacetylases HDAC4, HDAC6, and SIRT2, HDAC activity is required for antiaggregation.

Efficient suppressor of aggregation and toxicity of disease-associated polyglutamine proteins. The sequence is that of DnaJ homolog subfamily B member 8 (DNAJB8) from Homo sapiens (Human).